The following is a 291-amino-acid chain: E3 ubiquitin-protein ligase MARCHF8 (291 aa).

Residues Tyr-22–Ile-72 are disordered. A compositionally biased stretch (basic and acidic residues) spans Lys-25–Leu-39. The span at Ser-50–Ile-72 shows a compositional bias: low complexity. An RING-CH-type zinc finger spans residues Ile-72–Glu-133. Zn(2+) is bound by residues Cys-80, Cys-83, Cys-97, Cys-99, His-107, Cys-110, Cys-123, and Cys-126. The next 2 helical transmembrane spans lie at Cys-157–Ile-177 and Phe-197–Val-217. At Ser-253 the chain carries Phosphoserine.

As to quaternary structure, interacts with CD86. As to expression, broadly expressed. Present in immature dendritic cells (at protein level).

It localises to the golgi apparatus membrane. It is found in the endoplasmic reticulum membrane. Its subcellular location is the cytoplasmic vesicle membrane. The protein localises to the lysosome membrane. The protein resides in the early endosome membrane. The catalysed reaction is S-ubiquitinyl-[E2 ubiquitin-conjugating enzyme]-L-cysteine + [acceptor protein]-L-lysine = [E2 ubiquitin-conjugating enzyme]-L-cysteine + N(6)-ubiquitinyl-[acceptor protein]-L-lysine.. It functions in the pathway protein modification; protein ubiquitination. Functionally, E3 ubiquitin-protein ligase that plays several important roles in innate immunity and adaptive immunity. Mediates ubiquitination of CD86 and MHC class II proteins, such as HLA-DR alpha and beta, and promotes their subsequent endocytosis and sorting to lysosomes via multivesicular bodies. Possesses a very broad antiviral activity by specifically inactivating different viral fusion proteins. Targets and ubiquitinates cytoplasmic lysine residues of viral envelope glycoproteins with single transmembrane domains leading to their lysosomal degradation. Therefore, shows broad-spectrum inhibition against many viruses including retroviruses, rhabdoviruses, arenaviruses, sarbecoviruses or influenzaviruses. Strongly blocks human immunodeficiency virus type 1 envelope glycoprotein incorporation into virions by down-regulating its cell surface expression. Also blocks ebola virus glycoprotein/GP incorporation via surface down-regulation. Mediates 'Lys-63'-linked polyubiquitination of influenza M2 to target it to lysosome for degradation. Mediates the regulation of constitutive ubiquitination and trafficking of the viral restriction factor BST2 within the endocytic pathway. Plays a role in maintenance of immune tolerance to self by promoting the turnover and proteasomal degradation of PD-L1/CD274 via ubiquitination. Catalyzes the 'Lys-63'-linked polyubiquitylation of cGAS thereby inhibiting its DNA binding ability and impairing its antiviral innate immunity. Negatively regulates IL7-mediated T-cell homeostasis by mediating 'Lys-27'-linked polyubiquitination of IL7R, leading to its lysosomal degradation. (Microbial infection) Mediates 'Lys-63'-linked polyubiquitination of hepatitis C virus/HCV protein NS2 which allows its binding to HGS, an ESCRT-0 complex component, and this interaction is essential for HCV envelopment. In Homo sapiens (Human), this protein is E3 ubiquitin-protein ligase MARCHF8.